Here is a 155-residue protein sequence, read N- to C-terminus: Large ribosomal subunit protein uL22 (155 aa).

This sequence belongs to the universal ribosomal protein uL22 family. In terms of assembly, part of the 50S ribosomal subunit.

Its function is as follows. This protein binds specifically to 23S rRNA. It makes multiple contacts with different domains of the 23S rRNA in the assembled 50S subunit and ribosome. In terms of biological role, the globular domain of the protein is located near the polypeptide exit tunnel on the outside of the subunit, while an extended beta-hairpin is found that lines the wall of the exit tunnel in the center of the 70S ribosome. The chain is Large ribosomal subunit protein uL22 from Archaeoglobus fulgidus (strain ATCC 49558 / DSM 4304 / JCM 9628 / NBRC 100126 / VC-16).